The following is a 147-amino-acid chain: Basic phospholipase A2 beta-bungarotoxin A2 chain (147 aa).

An N-terminal signal peptide occupies residues 1–19 (MYPAHLLVLSAVCVSLLGA). The propeptide occupies 20-27 (ANIPPYPL). 6 disulfide bridges follow: cysteine 54/cysteine 146, cysteine 56/cysteine 72, cysteine 71/cysteine 127, cysteine 78/cysteine 120, cysteine 88/cysteine 113, and cysteine 106/cysteine 118. Residues tyrosine 55, glycine 57, and glycine 59 each coordinate Ca(2+). The active site involves histidine 75. Aspartate 76 is a Ca(2+) binding site. Aspartate 121 is an active-site residue.

It belongs to the phospholipase A2 family. Group I subfamily. D49 sub-subfamily. As to quaternary structure, heterodimer; disulfide-linked. The A chains have phospholipase A2 activity and the B chains show homology with the basic protease inhibitors. The cofactor is Ca(2+). As to expression, expressed by the venom gland.

It localises to the secreted. The catalysed reaction is a 1,2-diacyl-sn-glycero-3-phosphocholine + H2O = a 1-acyl-sn-glycero-3-phosphocholine + a fatty acid + H(+). Its function is as follows. Snake venom phospholipase A2 (PLA2) that inhibits neuromuscular transmission by blocking acetylcholine release from the nerve termini. PLA2 catalyzes the calcium-dependent hydrolysis of the 2-acyl groups in 3-sn-phosphoglycerides. In Bungarus caeruleus (Indian krait), this protein is Basic phospholipase A2 beta-bungarotoxin A2 chain.